Consider the following 57-residue polypeptide: UPF0434 protein swp_2279 (57 aa).

This sequence belongs to the UPF0434 family.

The polypeptide is UPF0434 protein swp_2279 (Shewanella piezotolerans (strain WP3 / JCM 13877)).